We begin with the raw amino-acid sequence, 131 residues long: Large ribosomal subunit protein bL12c (131 aa).

A disordered region spans residues 107–131 (QGVSKDDAEASKKQLEDAGAKVKIS). Residues 110-131 (SKDDAEASKKQLEDAGAKVKIS) are compositionally biased toward basic and acidic residues.

It belongs to the bacterial ribosomal protein bL12 family. As to quaternary structure, homodimer. Part of the ribosomal stalk of the 50S ribosomal subunit. Forms a multimeric L10(L12)X complex, where L10 forms an elongated spine to which 2 to 4 L12 dimers bind in a sequential fashion. Binds GTP-bound translation factors.

The protein resides in the plastid. It is found in the chloroplast. In terms of biological role, forms part of the ribosomal stalk which helps the ribosome interact with GTP-bound translation factors. Is thus essential for accurate translation. This chain is Large ribosomal subunit protein bL12c, found in Chlorella vulgaris (Green alga).